The chain runs to 495 residues: 3-octaprenyl-4-hydroxybenzoate carboxy-lyase (495 aa).

Asparagine 172 contributes to the Mn(2+) binding site. Prenylated FMN-binding positions include 175 to 177 (IYR), 189 to 191 (RWL), and 194 to 195 (RG). Glutamate 238 is a Mn(2+) binding site. Catalysis depends on aspartate 287, which acts as the Proton donor.

Belongs to the UbiD family. As to quaternary structure, homohexamer. Prenylated FMN is required as a cofactor. Requires Mn(2+) as cofactor.

It is found in the cell membrane. The catalysed reaction is a 4-hydroxy-3-(all-trans-polyprenyl)benzoate + H(+) = a 2-(all-trans-polyprenyl)phenol + CO2. Its pathway is cofactor biosynthesis; ubiquinone biosynthesis. Catalyzes the decarboxylation of 3-octaprenyl-4-hydroxy benzoate to 2-octaprenylphenol, an intermediate step in ubiquinone biosynthesis. The protein is 3-octaprenyl-4-hydroxybenzoate carboxy-lyase of Yersinia enterocolitica serotype O:8 / biotype 1B (strain NCTC 13174 / 8081).